The primary structure comprises 236 residues: Adenosine 5'-phosphosulfate reductase 2 (236 aa).

Residues cysteine 122, cysteine 123, cysteine 205, and cysteine 208 each coordinate [4Fe-4S] cluster. The disordered stretch occupies residues 216–236; it reads NDERAGRWAGREKTECGLHQE. The Nucleophile; cysteine thiosulfonate intermediate role is filled by cysteine 231.

The protein belongs to the PAPS reductase family. CysH subfamily. It depends on [4Fe-4S] cluster as a cofactor.

It localises to the cytoplasm. The enzyme catalyses [thioredoxin]-disulfide + sulfite + AMP + 2 H(+) = adenosine 5'-phosphosulfate + [thioredoxin]-dithiol. It participates in sulfur metabolism; hydrogen sulfide biosynthesis; sulfite from sulfate. In terms of biological role, catalyzes the formation of sulfite from adenosine 5'-phosphosulfate (APS) using thioredoxin as an electron donor. In Bacillus subtilis (strain 168), this protein is Adenosine 5'-phosphosulfate reductase 2.